Reading from the N-terminus, the 334-residue chain is Holliday junction branch migration complex subunit RuvB (334 aa).

A large ATPase domain (RuvB-L) region spans residues 4 to 186 (ADRLIAPISN…FGIVQRLEYY (183 aa)). ATP is bound by residues I25, R26, G67, K70, T71, T72, 133 to 135 (EDY), R176, Y186, and R223. T71 contributes to the Mg(2+) binding site. The segment at 187–257 (KVADLQHIVQ…TADRALNMLD (71 aa)) is small ATPAse domain (RuvB-S). The head domain (RuvB-H) stretch occupies residues 260-334 (HQGFDYMDRK…RAYLHFGIEK (75 aa)). R315 and R320 together coordinate DNA.

This sequence belongs to the RuvB family. As to quaternary structure, homohexamer. Forms an RuvA(8)-RuvB(12)-Holliday junction (HJ) complex. HJ DNA is sandwiched between 2 RuvA tetramers; dsDNA enters through RuvA and exits via RuvB. An RuvB hexamer assembles on each DNA strand where it exits the tetramer. Each RuvB hexamer is contacted by two RuvA subunits (via domain III) on 2 adjacent RuvB subunits; this complex drives branch migration. In the full resolvosome a probable DNA-RuvA(4)-RuvB(12)-RuvC(2) complex forms which resolves the HJ.

Its subcellular location is the cytoplasm. The enzyme catalyses ATP + H2O = ADP + phosphate + H(+). Its function is as follows. The RuvA-RuvB-RuvC complex processes Holliday junction (HJ) DNA during genetic recombination and DNA repair, while the RuvA-RuvB complex plays an important role in the rescue of blocked DNA replication forks via replication fork reversal (RFR). RuvA specifically binds to HJ cruciform DNA, conferring on it an open structure. The RuvB hexamer acts as an ATP-dependent pump, pulling dsDNA into and through the RuvAB complex. RuvB forms 2 homohexamers on either side of HJ DNA bound by 1 or 2 RuvA tetramers; 4 subunits per hexamer contact DNA at a time. Coordinated motions by a converter formed by DNA-disengaged RuvB subunits stimulates ATP hydrolysis and nucleotide exchange. Immobilization of the converter enables RuvB to convert the ATP-contained energy into a lever motion, pulling 2 nucleotides of DNA out of the RuvA tetramer per ATP hydrolyzed, thus driving DNA branch migration. The RuvB motors rotate together with the DNA substrate, which together with the progressing nucleotide cycle form the mechanistic basis for DNA recombination by continuous HJ branch migration. Branch migration allows RuvC to scan DNA until it finds its consensus sequence, where it cleaves and resolves cruciform DNA. This is Holliday junction branch migration complex subunit RuvB from Vibrio cholerae serotype O1 (strain ATCC 39315 / El Tor Inaba N16961).